The primary structure comprises 117 residues: Large ribosomal subunit protein uL18 (117 aa).

The protein belongs to the universal ribosomal protein uL18 family. In terms of assembly, part of the 50S ribosomal subunit; part of the 5S rRNA/L5/L18/L25 subcomplex. Contacts the 5S and 23S rRNAs.

This is one of the proteins that bind and probably mediate the attachment of the 5S RNA into the large ribosomal subunit, where it forms part of the central protuberance. The chain is Large ribosomal subunit protein uL18 from Leuconostoc mesenteroides subsp. mesenteroides (strain ATCC 8293 / DSM 20343 / BCRC 11652 / CCM 1803 / JCM 6124 / NCDO 523 / NBRC 100496 / NCIMB 8023 / NCTC 12954 / NRRL B-1118 / 37Y).